We begin with the raw amino-acid sequence, 529 residues long: Peptide chain release factor 3 (529 aa).

The region spanning 11–280 is the tr-type G domain; the sequence is NSRRTFAIIS…AFINWAPEPK (270 aa). GTP is bound by residues 20–27, 88–92, and 142–145; these read SHPDAGKT, DTPGH, and NKMD.

It belongs to the TRAFAC class translation factor GTPase superfamily. Classic translation factor GTPase family. PrfC subfamily.

It localises to the cytoplasm. Functionally, increases the formation of ribosomal termination complexes and stimulates activities of RF-1 and RF-2. It binds guanine nucleotides and has strong preference for UGA stop codons. It may interact directly with the ribosome. The stimulation of RF-1 and RF-2 is significantly reduced by GTP and GDP, but not by GMP. This Acinetobacter baylyi (strain ATCC 33305 / BD413 / ADP1) protein is Peptide chain release factor 3.